The following is a 456-amino-acid chain: Peptide chain release factor PrfB1, chloroplastic (456 aa).

A chloroplast-targeting transit peptide spans 1–58; it reads MSMELTVLGPLAGRSFAIAGKPKLLLLRPTNLPLLRLSLPLSLPNFSSSSRFNSPIVF.

Belongs to the prokaryotic/mitochondrial release factor family. In terms of tissue distribution, expressed in leaves, stems and flowers.

The protein resides in the plastid. The protein localises to the chloroplast stroma. In terms of biological role, directs the termination of translation in response to the peptide chain termination codon UGA. Required for the proper translation, stability and normal processing of UGA-containing polycistronic transcripts in chloroplasts. The polypeptide is Peptide chain release factor PrfB1, chloroplastic (Arabidopsis thaliana (Mouse-ear cress)).